A 392-amino-acid chain; its full sequence is MTKEEKTLKEYIFTSESVTEGHPDKMADQISDAILDYIIEHDPSAHVACETLVSNGFCVIAGELKTTAYAPMQEIVRRVVQEIGYTDATYGFDYRSAAVLNGIGEQSPDITQGVTLLDGEIGAGDQGLMFGYACRETDVLMPLPIYLAHLLTRRLAEVRKEGIIPYLRPDGKAQISVKYIGDKPVSVEAVVVSTQHAPEVSQEKIREDVIRDVIRAVIPAELMSEKTLFHINPTGKFVIGGPQGDAGLTGRKIIVDTYGGSCPHGGGAFSGKDPTKVDRSAAYACRHVAKNLVAAGVCDRVTIQIAYAIGISAPVSIMIDTHNTAIVEEKKIESCVKELFDLTPKGIIKSLDLLRPIYRKTAVYGHFGREEEGFTWELTNRVEDIKKYLKIN.

H22 contacts ATP. D24 lines the Mg(2+) pocket. E50 contacts K(+). The L-methionine site is built by E63 and Q106. The interval 106–116 (QSPDITQGVTL) is flexible loop. ATP is bound by residues 170 to 172 (DGK), 236 to 237 (KF), D245, 251 to 252 (RK), A268, and K272. D245 contributes to the L-methionine binding site. Residue K276 participates in L-methionine binding.

Belongs to the AdoMet synthase family. In terms of assembly, homotetramer; dimer of dimers. Mg(2+) is required as a cofactor. K(+) serves as cofactor.

Its subcellular location is the cytoplasm. The catalysed reaction is L-methionine + ATP + H2O = S-adenosyl-L-methionine + phosphate + diphosphate. It functions in the pathway amino-acid biosynthesis; S-adenosyl-L-methionine biosynthesis; S-adenosyl-L-methionine from L-methionine: step 1/1. In terms of biological role, catalyzes the formation of S-adenosylmethionine (AdoMet) from methionine and ATP. The overall synthetic reaction is composed of two sequential steps, AdoMet formation and the subsequent tripolyphosphate hydrolysis which occurs prior to release of AdoMet from the enzyme. This Sulfurimonas denitrificans (strain ATCC 33889 / DSM 1251) (Thiomicrospira denitrificans (strain ATCC 33889 / DSM 1251)) protein is S-adenosylmethionine synthase.